The following is a 135-amino-acid chain: C-type lectin LmsL (135 aa).

4 disulfide bridges follow: cysteine 3–cysteine 14, cysteine 31–cysteine 131, cysteine 38–cysteine 133, and cysteine 106–cysteine 123. Residues 10-132 (MNGLCYKIFD…CESKNAFLCQ (123 aa)) enclose the C-type lectin domain. 5 residues coordinate Ca(2+): glutamine 96, aspartate 98, glutamate 104, asparagine 119, and aspartate 120. Positions 96–98 (QPD) match the Galactose-binding motif.

The protein belongs to the true venom lectin family. Homodimer; disulfide-linked. In terms of tissue distribution, expressed by the venom gland.

Its subcellular location is the secreted. Galactose-binding protein which recognizes specific carbohydrate structures and agglutinates a variety of animal cells by binding to cell-surface glycoproteins and glycolipids. Is a calcium-dependent lectin. Shows high hemagglutinating activity, that is inhibited by lactose, galactose and inositol. The protein is C-type lectin LmsL of Lachesis stenophrys (Central American bushmaster).